A 307-amino-acid chain; its full sequence is MEGVVLLHKPKGMTSHDCIFKLRKILREKRIGHTGTLDPDVTGVLPICVGRATKIAQFLTSETKTYEGEVTLGFSTTTEDASGEVVETKHVDRVITRKEVEEVLAALTGTIEQMPPMFSAVKVNGKKLYEYARAGQEVERPVRTITIHEFVLLDEREVFEGENISFRFRVTCSKGTYVRTLAVMIGEKLGFPSHMSHLVRTASGEFVLEDCISFEEIEENVQNGTVESIFISIDEALSKFPKMVVDEKQAEKIKNGMFLKNELQITAPFITVFDKNDRCLAIYEHHPKHPGMLKPMKVLVNNQELKL.

The active-site Nucleophile is the Asp-38.

Belongs to the pseudouridine synthase TruB family. Type 1 subfamily.

The catalysed reaction is uridine(55) in tRNA = pseudouridine(55) in tRNA. In terms of biological role, responsible for synthesis of pseudouridine from uracil-55 in the psi GC loop of transfer RNAs. The chain is tRNA pseudouridine synthase B from Bacillus cereus (strain ATCC 10987 / NRS 248).